We begin with the raw amino-acid sequence, 1101 residues long: Rho GTPase-activating protein 30 (1101 aa).

In terms of domain architecture, Rho-GAP spans cysteine 20 to phenylalanine 215. Disordered regions lie at residues glutamate 224–aspartate 243, histidine 300–glycine 400, and alanine 451–glycine 529. Positions arginine 308–asparagine 318 are enriched in basic and acidic residues. A compositionally biased stretch (acidic residues) spans leucine 360–alanine 376. Over residues alanine 459 to proline 472 the composition is skewed to pro residues. Low complexity predominate over residues aspartate 508–glutamate 520. Serine 576 carries the post-translational modification Phosphoserine. Disordered regions lie at residues glycine 621–proline 906 and cysteine 965–asparagine 991. Basic and acidic residues-rich tracts occupy residues glycine 658–glutamate 694, threonine 701–glutamate 735, glutamate 759–glutamate 770, and alanine 779–serine 822. Residues glycine 976–asparagine 991 show a composition bias toward low complexity. Phosphoserine is present on serine 996. The interval leucine 1050 to leucine 1101 is disordered. Positions proline 1053 to proline 1069 are enriched in low complexity. A compositionally biased stretch (polar residues) spans leucine 1080–asparagine 1094.

Interacts with RHOU in a GTP-independent manner.

It localises to the cytoplasmic vesicle. GTPase-activating protein (GAP) for RAC1 and RHOA, but not for CDC42. The polypeptide is Rho GTPase-activating protein 30 (ARHGAP30) (Homo sapiens (Human)).